Here is a 340-residue protein sequence, read N- to C-terminus: tRNA N6-adenosine threonylcarbamoyltransferase (340 aa).

Fe cation contacts are provided by H115 and H119. Substrate contacts are provided by residues 138–142 (VVSGG), D171, G184, D188, and N278. Residue D306 coordinates Fe cation.

This sequence belongs to the KAE1 / TsaD family. Requires Fe(2+) as cofactor.

It localises to the cytoplasm. It catalyses the reaction L-threonylcarbamoyladenylate + adenosine(37) in tRNA = N(6)-L-threonylcarbamoyladenosine(37) in tRNA + AMP + H(+). Its function is as follows. Required for the formation of a threonylcarbamoyl group on adenosine at position 37 (t(6)A37) in tRNAs that read codons beginning with adenine. Is involved in the transfer of the threonylcarbamoyl moiety of threonylcarbamoyl-AMP (TC-AMP) to the N6 group of A37, together with TsaE and TsaB. TsaD likely plays a direct catalytic role in this reaction. The polypeptide is tRNA N6-adenosine threonylcarbamoyltransferase (Clostridium botulinum (strain 657 / Type Ba4)).